The chain runs to 94 residues: Large ribosomal subunit protein bL27 (94 aa).

A propeptide spanning residues 1–9 (MLKLNLQFF) is cleaved from the precursor. The segment at 13–32 (KGLGSTKNGRDSESKRLGAK) is disordered. Residues 20 to 32 (NGRDSESKRLGAK) show a composition bias toward basic and acidic residues.

The protein belongs to the bacterial ribosomal protein bL27 family. In terms of processing, the N-terminus is cleaved by ribosomal processing cysteine protease Prp.

The protein is Large ribosomal subunit protein bL27 of Staphylococcus saprophyticus subsp. saprophyticus (strain ATCC 15305 / DSM 20229 / NCIMB 8711 / NCTC 7292 / S-41).